The following is a 386-amino-acid chain: Phosphoglycerate kinase (386 aa).

Residues 21-23 (DLN), Arg36, 59-62 (HLGR), Arg113, and Arg146 each bind substrate. Residues Lys197, Glu313, and 339 to 342 (GGDT) contribute to the ATP site.

The protein belongs to the phosphoglycerate kinase family. As to quaternary structure, monomer.

It localises to the cytoplasm. It catalyses the reaction (2R)-3-phosphoglycerate + ATP = (2R)-3-phospho-glyceroyl phosphate + ADP. The protein operates within carbohydrate degradation; glycolysis; pyruvate from D-glyceraldehyde 3-phosphate: step 2/5. The protein is Phosphoglycerate kinase of Serratia proteamaculans (strain 568).